The sequence spans 242 residues: Trypsin-1 (242 aa).

An N-terminal signal peptide occupies residues 1–15 (MISLVFVLLIGAAFA). Positions 16-20 (TEDDK) are cleaved as a propeptide — activation peptide. The region spanning 21–240 (IVGGYECKAY…FNDWLTSTMA (220 aa)) is the Peptidase S1 domain. 6 cysteine pairs are disulfide-bonded: cysteine 27–cysteine 156, cysteine 45–cysteine 61, cysteine 129–cysteine 229, cysteine 136–cysteine 202, cysteine 167–cysteine 181, and cysteine 192–cysteine 216. Histidine 60 (charge relay system) is an active-site residue. Glutamate 72, asparagine 74, valine 77, and glutamate 82 together coordinate Ca(2+). Aspartate 104 serves as the catalytic Charge relay system. The active-site Charge relay system is the serine 196.

This sequence belongs to the peptidase S1 family. Ca(2+) is required as a cofactor.

The protein resides in the secreted. Its subcellular location is the extracellular space. The catalysed reaction is Preferential cleavage: Arg-|-Xaa, Lys-|-Xaa.. The polypeptide is Trypsin-1 (Salmo salar (Atlantic salmon)).